Here is a 422-residue protein sequence, read N- to C-terminus: Serine--tRNA ligase (422 aa).

Residue 231 to 233 (TGE) coordinates L-serine. 262–264 (RQE) provides a ligand contact to ATP. Position 285 (glutamate 285) interacts with L-serine. 349-352 (EISS) serves as a coordination point for ATP. Serine 384 serves as a coordination point for L-serine.

Belongs to the class-II aminoacyl-tRNA synthetase family. Type-1 seryl-tRNA synthetase subfamily. As to quaternary structure, homodimer. The tRNA molecule binds across the dimer.

It is found in the cytoplasm. It carries out the reaction tRNA(Ser) + L-serine + ATP = L-seryl-tRNA(Ser) + AMP + diphosphate + H(+). The enzyme catalyses tRNA(Sec) + L-serine + ATP = L-seryl-tRNA(Sec) + AMP + diphosphate + H(+). Its pathway is aminoacyl-tRNA biosynthesis; selenocysteinyl-tRNA(Sec) biosynthesis; L-seryl-tRNA(Sec) from L-serine and tRNA(Sec): step 1/1. In terms of biological role, catalyzes the attachment of serine to tRNA(Ser). Is also able to aminoacylate tRNA(Sec) with serine, to form the misacylated tRNA L-seryl-tRNA(Sec), which will be further converted into selenocysteinyl-tRNA(Sec). This Mesoplasma florum (strain ATCC 33453 / NBRC 100688 / NCTC 11704 / L1) (Acholeplasma florum) protein is Serine--tRNA ligase.